The chain runs to 215 residues: ATP-dependent Clp protease proteolytic subunit (215 aa).

The active-site Nucleophile is the Ser-111. Residue His-136 is part of the active site.

The protein belongs to the peptidase S14 family. Fourteen ClpP subunits assemble into 2 heptameric rings which stack back to back to give a disk-like structure with a central cavity, resembling the structure of eukaryotic proteasomes.

The protein localises to the cytoplasm. The enzyme catalyses Hydrolysis of proteins to small peptides in the presence of ATP and magnesium. alpha-casein is the usual test substrate. In the absence of ATP, only oligopeptides shorter than five residues are hydrolyzed (such as succinyl-Leu-Tyr-|-NHMec, and Leu-Tyr-Leu-|-Tyr-Trp, in which cleavage of the -Tyr-|-Leu- and -Tyr-|-Trp bonds also occurs).. Cleaves peptides in various proteins in a process that requires ATP hydrolysis. Has a chymotrypsin-like activity. Plays a major role in the degradation of misfolded proteins. The sequence is that of ATP-dependent Clp protease proteolytic subunit from Hamiltonella defensa subsp. Acyrthosiphon pisum (strain 5AT).